The primary structure comprises 359 residues: Protein-glutamate methylesterase/protein-glutamine glutaminase 2 (359 aa).

Residues 6 to 123 form the Response regulatory domain; it reads KVMIVDDSAL…KSFLEDASND (118 aa). The residue at position 57 (D57) is a 4-aspartylphosphate. One can recognise a CheB-type methylesterase domain in the interval 167-359; that stretch reads ERTTDQLVAI…GAIVGYGKSC (193 aa). Residues S179, H205, and D301 contribute to the active site.

It belongs to the CheB family. In terms of processing, phosphorylated by CheA. Phosphorylation of the N-terminal regulatory domain activates the methylesterase activity.

Its subcellular location is the cytoplasm. It carries out the reaction [protein]-L-glutamate 5-O-methyl ester + H2O = L-glutamyl-[protein] + methanol + H(+). The catalysed reaction is L-glutaminyl-[protein] + H2O = L-glutamyl-[protein] + NH4(+). Its function is as follows. Involved in chemotaxis. Part of a chemotaxis signal transduction system that modulates chemotaxis in response to various stimuli. Catalyzes the demethylation of specific methylglutamate residues introduced into the chemoreceptors (methyl-accepting chemotaxis proteins or MCP) by CheR. Also mediates the irreversible deamidation of specific glutamine residues to glutamic acid. In Dechloromonas aromatica (strain RCB), this protein is Protein-glutamate methylesterase/protein-glutamine glutaminase 2.